The primary structure comprises 569 residues: MAYKIDRKTYAQTYGPTAGDRVRLADTELFIEVEKDLTTYGDEVKFGGGKVIRDGMGQSQVRRADGAVDTVITNALIVDWWGIIKADVGIKDGMIFEIGKAGNPDIQDNVDIVIGASTEVIAGEGHILTAGSIDTHIHFICPQQIETALASGITTMLGGGTGPATGTNATTCTPGSFHISRMLQSAEAFPMNLGFYGKGNSTNESNLIDQVEAGACGLKLHEDWGTTPSTINSCLNIADKFDVQVCIHTDTLNEAGFVEDTINAIAGRTIHTFHTEGAGGGHAPDIIKICGEKNVLPSSTNPTRPYTRNTLEEHLDMLMVCHHLDSKIPEDIAFAESRIRRETIAAEDILHDIGAFSVIASDSQAMGRVGEVITRTFQTAHKMKVQRGPLMQDSDRNDNYRVKRYISKVTINPAIAHGIDKHVGSIEKGKIADLVLWKPSFFAVKPELVVKGGSIVWSQMGDANASIPTPGPVHGRPMFASFGQSLIKSSFTFLSKNSIDQNIPNKLSLQKKCIAVENTRNINKSHLKLNSKLPNILVDPQTYEVFSDGELLTCEPLDEVPMAQRYFLL.

The Urease domain maps to 131 to 569; sequence GSIDTHIHFI…VPMAQRYFLL (439 aa). Residues H136, H138, and K219 each coordinate Ni(2+). K219 is modified (N6-carboxylysine). Position 221 (H221) interacts with substrate. Residues H248 and H274 each coordinate Ni(2+). H322 serves as the catalytic Proton donor. D362 contacts Ni(2+).

It belongs to the metallo-dependent hydrolases superfamily. Urease alpha subunit family. Heterotrimer of UreA (gamma), UreB (beta) and UreC (alpha) subunits. Three heterotrimers associate to form the active enzyme. Ni cation serves as cofactor. Post-translationally, carboxylation allows a single lysine to coordinate two nickel ions.

The protein resides in the cytoplasm. It carries out the reaction urea + 2 H2O + H(+) = hydrogencarbonate + 2 NH4(+). It participates in nitrogen metabolism; urea degradation; CO(2) and NH(3) from urea (urease route): step 1/1. This chain is Urease subunit alpha, found in Prochlorococcus marinus (strain MIT 9215).